The sequence spans 183 residues: RNA pyrophosphohydrolase (183 aa).

A Nudix hydrolase domain is found at 6–149; it reads GYRPNVGIIL…KREVYRLALE (144 aa). The short motif at 38 to 59 is the Nudix box element; it reads GGINAGETPEQAMFRELEEEVG.

It belongs to the Nudix hydrolase family. RppH subfamily. It depends on a divalent metal cation as a cofactor.

Functionally, accelerates the degradation of transcripts by removing pyrophosphate from the 5'-end of triphosphorylated RNA, leading to a more labile monophosphorylated state that can stimulate subsequent ribonuclease cleavage. The sequence is that of RNA pyrophosphohydrolase from Thiobacillus denitrificans (strain ATCC 25259 / T1).